We begin with the raw amino-acid sequence, 325 residues long: Fe-S cluster assembly protein DRE2 (325 aa).

Residues 1-169 (MTLGDRLGLI…KKKDAGNNEQ (169 aa)) are N-terminal SAM-like domain. The segment at 170-222 (VVKLSVEDVEDDLDDDPEVSNELLSKAKFFNSLSLNQDAEIDENNLIKSTDGD) is linker. The [2Fe-2S] cluster site is built by Cys229, Cys240, Cys243, and Cys245. The interval 229 to 245 (CGKTNTKKRRACKDCTC) is fe-S binding site A. Residues Cys288, Cys291, Cys299, and Cys302 each contribute to the [4Fe-4S] cluster site. 2 consecutive short sequence motifs (cx2C motif) follow at residues 288 to 291 (CGSC) and 299 to 302 (CSGC). The tract at residues 288–302 (CGSCSLGDAFRCSGC) is fe-S binding site B.

The protein belongs to the anamorsin family. In terms of assembly, monomer. Interacts with TAH18. Interacts with MIA40. It depends on [2Fe-2S] cluster as a cofactor. [4Fe-4S] cluster is required as a cofactor.

The protein resides in the cytoplasm. Its subcellular location is the mitochondrion intermembrane space. Functionally, component of the cytosolic iron-sulfur (Fe-S) protein assembly (CIA) machinery required for the maturation of extramitochondrial Fe-S proteins. Part of an electron transfer chain functioning in an early step of cytosolic Fe-S biogenesis, facilitating the de novo assembly of a [4Fe-4S] cluster on the scaffold complex CFD1-NBP35. Electrons are transferred to DRE2 from NADPH via the FAD- and FMN-containing protein TAH18. TAH18-DRE2 are also required for the assembly of the diferric tyrosyl radical cofactor of ribonucleotide reductase (RNR), probably by providing electrons for reduction during radical cofactor maturation in the catalytic small subunit RNR2. The protein is Fe-S cluster assembly protein DRE2 of Vanderwaltozyma polyspora (strain ATCC 22028 / DSM 70294 / BCRC 21397 / CBS 2163 / NBRC 10782 / NRRL Y-8283 / UCD 57-17) (Kluyveromyces polysporus).